Here is a 607-residue protein sequence, read N- to C-terminus: Glutamine--fructose-6-phosphate aminotransferase [isomerizing] (607 aa).

The Nucleophile; for GATase activity role is filled by C2. Positions C2–E217 constitute a Glutamine amidotransferase type-2 domain. SIS domains lie at T277–S422 and I455–P597. K602 (for Fru-6P isomerization activity) is an active-site residue.

In terms of assembly, homodimer.

The protein resides in the cytoplasm. It carries out the reaction D-fructose 6-phosphate + L-glutamine = D-glucosamine 6-phosphate + L-glutamate. Catalyzes the first step in hexosamine metabolism, converting fructose-6P into glucosamine-6P using glutamine as a nitrogen source. This Bartonella quintana (strain Toulouse) (Rochalimaea quintana) protein is Glutamine--fructose-6-phosphate aminotransferase [isomerizing].